The following is a 187-amino-acid chain: Protein GrpE (187 aa).

The span at 1–11 (MTDSSNEHETE) shows a compositional bias: basic and acidic residues. Residues 1-23 (MTDSSNEHETENPSVPNPDNEIQ) are disordered.

Belongs to the GrpE family. In terms of assembly, homodimer.

Its subcellular location is the cytoplasm. Its function is as follows. Participates actively in the response to hyperosmotic and heat shock by preventing the aggregation of stress-denatured proteins, in association with DnaK and GrpE. It is the nucleotide exchange factor for DnaK and may function as a thermosensor. Unfolded proteins bind initially to DnaJ; upon interaction with the DnaJ-bound protein, DnaK hydrolyzes its bound ATP, resulting in the formation of a stable complex. GrpE releases ADP from DnaK; ATP binding to DnaK triggers the release of the substrate protein, thus completing the reaction cycle. Several rounds of ATP-dependent interactions between DnaJ, DnaK and GrpE are required for fully efficient folding. The sequence is that of Protein GrpE from Chlamydia felis (strain Fe/C-56) (Chlamydophila felis).